The following is a 486-amino-acid chain: D-mannonate oxidoreductase (486 aa).

Residue 25-36 (IVHLGCGAFHRA) participates in NAD(+) binding.

It belongs to the mannitol dehydrogenase family. UxuB subfamily.

The enzyme catalyses D-mannonate + NAD(+) = keto-D-fructuronate + NADH + H(+). It functions in the pathway carbohydrate metabolism; pentose and glucuronate interconversion. This is D-mannonate oxidoreductase (uxuB) from Escherichia coli (strain K12).